The sequence spans 524 residues: GMP synthase [glutamine-hydrolyzing] (524 aa).

The Glutamine amidotransferase type-1 domain occupies 8-206; sequence KILILDFGSQ…VRKLCQCEAR (199 aa). C85 (nucleophile) is an active-site residue. Catalysis depends on residues H180 and E182. Residues 207–399 form the GMPS ATP-PPase domain; that stretch reads WTTGNIVEDA…LGLPYEMVYR (193 aa). Residue 234-240 coordinates ATP; the sequence is SGGVDSS.

In terms of assembly, homodimer.

The enzyme catalyses XMP + L-glutamine + ATP + H2O = GMP + L-glutamate + AMP + diphosphate + 2 H(+). It functions in the pathway purine metabolism; GMP biosynthesis; GMP from XMP (L-Gln route): step 1/1. Its function is as follows. Catalyzes the synthesis of GMP from XMP. The protein is GMP synthase [glutamine-hydrolyzing] of Methylococcus capsulatus (strain ATCC 33009 / NCIMB 11132 / Bath).